We begin with the raw amino-acid sequence, 776 residues long: Protein translocase subunit SecA 2 (776 aa).

Residues Q80, 98–102 (GEGKT), and D486 contribute to the ATP site.

This sequence belongs to the SecA family. In terms of assembly, monomer and homodimer. Part of the essential Sec protein translocation apparatus which comprises SecA, SecYEG and auxiliary proteins SecDF. Other proteins may also be involved.

It is found in the cell membrane. The protein localises to the cytoplasm. It carries out the reaction ATP + H2O + cellular proteinSide 1 = ADP + phosphate + cellular proteinSide 2.. Its function is as follows. Part of the Sec protein translocase complex. Interacts with the SecYEG preprotein conducting channel. Has a central role in coupling the hydrolysis of ATP to the transfer of proteins into and across the cell membrane, serving as an ATP-driven molecular motor driving the stepwise translocation of polypeptide chains across the membrane. The sequence is that of Protein translocase subunit SecA 2 from Listeria monocytogenes serotype 4b (strain F2365).